The following is a 473-amino-acid chain: Photosystem II CP43 reaction center protein (473 aa).

A propeptide spanning residues 1-14 (MKTLYSLRRFYHVE) is cleaved from the precursor. Residue Thr-15 is modified to N-acetylthreonine. Thr-15 carries the phosphothreonine modification. Helical transmembrane passes span 69 to 93 (LFEV…PHLA), 134 to 155 (LLGP…KDRN), 178 to 200 (KAFY…RKIT), 255 to 275 (KPFA…LSYS), and 291 to 312 (WFNN…ASQA). Residue Glu-367 coordinates [CaMn4O5] cluster. Residues 447 to 471 (RARAAAAGFEKGIDRDFEPVLSMTP) form a helical membrane-spanning segment.

Belongs to the PsbB/PsbC family. PsbC subfamily. As to quaternary structure, PSII is composed of 1 copy each of membrane proteins PsbA, PsbB, PsbC, PsbD, PsbE, PsbF, PsbH, PsbI, PsbJ, PsbK, PsbL, PsbM, PsbT, PsbX, PsbY, PsbZ, Psb30/Ycf12, at least 3 peripheral proteins of the oxygen-evolving complex and a large number of cofactors. It forms dimeric complexes. Requires Binds multiple chlorophylls and provides some of the ligands for the Ca-4Mn-5O cluster of the oxygen-evolving complex. It may also provide a ligand for a Cl- that is required for oxygen evolution. PSII binds additional chlorophylls, carotenoids and specific lipids. as cofactor.

Its subcellular location is the plastid. It localises to the chloroplast thylakoid membrane. Its function is as follows. One of the components of the core complex of photosystem II (PSII). It binds chlorophyll and helps catalyze the primary light-induced photochemical processes of PSII. PSII is a light-driven water:plastoquinone oxidoreductase, using light energy to abstract electrons from H(2)O, generating O(2) and a proton gradient subsequently used for ATP formation. The sequence is that of Photosystem II CP43 reaction center protein from Pisum sativum (Garden pea).